A 146-amino-acid chain; its full sequence is Ankyrin repeat-containing protein P16F5.05c (146 aa).

4 ANK repeats span residues 1 to 31 (MDVD…ELSR), 35 to 64 (NGNS…KEVI), 70 to 99 (SGNT…DPHI), and 103 to 132 (YEKS…AKGS).

The protein resides in the cytoplasm. Its subcellular location is the nucleus. The polypeptide is Ankyrin repeat-containing protein P16F5.05c (Schizosaccharomyces pombe (strain 972 / ATCC 24843) (Fission yeast)).